A 26-amino-acid chain; its full sequence is Omega-conotoxin CVIC (26 aa).

Cystine bridges form between Cys-1–Cys-16, Cys-8–Cys-20, and Cys-15–Cys-26. Cys-26 is subject to Cysteine amide.

It belongs to the conotoxin O1 superfamily. Expressed by the venom duct.

It is found in the secreted. In terms of biological role, omega-conotoxins act at presynaptic membranes, they bind and block voltage-gated calcium channels (Cav). This toxin blocks N-, P- and Q-type calcium channels. The polypeptide is Omega-conotoxin CVIC (Conus catus (Cat cone)).